Here is a 316-residue protein sequence, read N- to C-terminus: Melanocyte-stimulating hormone receptor (316 aa).

Residues Met-1–Glu-37 lie on the Extracellular side of the membrane. Asn-29 is a glycosylation site (N-linked (GlcNAc...) asparagine). The chain crosses the membrane as a helical span at residues Val-38–Ile-63. Over Ala-64 to Ser-72 the chain is Cytoplasmic. Residues Met-73 to Leu-93 traverse the membrane as a helical segment. Over Glu-94–Asn-118 the chain is Extracellular. Residues Thr-119–Val-140 form a helical membrane-spanning segment. Over Asp-141–Arg-163 the chain is Cytoplasmic. A helical transmembrane segment spans residues Ala-164–Tyr-183. Residues Asp-184–Cys-191 lie on the Extracellular side of the membrane. Residues Leu-192–Leu-211 traverse the membrane as a helical segment. Residues Ala-212–Ala-240 are Cytoplasmic-facing. A helical membrane pass occupies residues Ala-241–Phe-266. Residues Cys-267 to Asn-279 are Extracellular-facing. A helical membrane pass occupies residues Phe-280–Phe-300. Over Arg-301–Trp-316 the chain is Cytoplasmic. Cys-314 is lipidated: S-palmitoyl cysteine.

It belongs to the G-protein coupled receptor 1 family. In terms of assembly, interacts with MGRN1, but does not undergo MGRN1-mediated ubiquitination; this interaction competes with GNAS-binding and thus inhibits agonist-induced cAMP production. Interacts with OPN3; the interaction results in a decrease in MC1R-mediated cAMP signaling and ultimately a decrease in melanin production in melanocytes.

It localises to the cell membrane. Receptor for MSH (alpha, beta and gamma) and ACTH. The activity of this receptor is mediated by G proteins which activate adenylate cyclase. Mediates melanogenesis, the production of eumelanin (black/brown) and phaeomelanin (red/yellow), via regulation of cAMP signaling in melanocytes. This chain is Melanocyte-stimulating hormone receptor (MC1R), found in Saguinus geoffroyi (Geoffroy's tamarin).